The chain runs to 247 residues: Small ribosomal subunit protein uS2 (247 aa).

Belongs to the universal ribosomal protein uS2 family.

The chain is Small ribosomal subunit protein uS2 from Pseudomonas syringae pv. syringae (strain B728a).